Reading from the N-terminus, the 488-residue chain is Probable (S)-N-methylcoclaurine 3'-hydroxylase isozyme 2 (488 aa).

The chain crosses the membrane as a helical span at residues 2–21 (EVLSIAIVSFSFLLFLFFIL). Residue Cys-427 coordinates heme.

This sequence belongs to the cytochrome P450 family. Requires heme as cofactor. In terms of tissue distribution, expressed at low levels in roots.

Its subcellular location is the endoplasmic reticulum membrane. It localises to the microsome membrane. The enzyme catalyses (S)-N-methylcoclaurine + reduced [NADPH--hemoprotein reductase] + O2 = (S)-3'-hydroxy-N-methylcoclaurine + oxidized [NADPH--hemoprotein reductase] + H2O + H(+). Its pathway is alkaloid biosynthesis; (S)-reticuline biosynthesis; (S)-reticuline from (S)-norcoclaurine: step 3/4. In terms of biological role, 3'-hydroxylation of (S)-N-methylcoclaurine. This chain is Probable (S)-N-methylcoclaurine 3'-hydroxylase isozyme 2 (CYP80B2), found in Coptis japonica (Japanese goldthread).